Consider the following 2344-residue polypeptide: MYSQHELRNKVSLALSSLLRYTFELTPFFELYEADFAYALYAGFELATNRKVVGKFSFQNVHLENEYNILTEIAKDERASKFSPTPIEFTSFPHIDLSACIAYDFGHGAELSTSYAYFRENPAEFVRFCIAICKCIEYLHSKGMVHGEIRLDSFIPISSYDNVYMLTVGSGASYFHNCLQAHNWRKYSEDSESMSRILFISPEQTGRTSYSVGYRTDIYSLGVLFFHYLSDCSPYTGSFVQRIRSILTEPLPDISKSCPKLPHLIFKIIEKMTRKNPDERYTSCSGIVNDLEACLDDIDKGLILNDHVLEKTGRTSLFYLPCSIYGREHEIKLIRKILRNSPRAINHQDKKDLETFNPYYLNAIESESSSQSLSLSQRASEVMPLVILITGCEGIGESSLIQTICDRREGYMAITKFEVSQSIVYSAIVSAVAEFIRQILAEDQLLLNNFFEELKNKLESDLYLLDSVFDLVPEIRSLLQQFSTSSGNTRKTSLLGSNHSSYSDKLGSPTILSTSFSLARPYPEPALVSPSTERPPRSSFSAALMTLLNIIASFKKVTMVIENIHLADESSLIILQKIVYSDLPLTLMITCDKENDHVINRFRLANDRIHEIELKPLSFNAVNSYVQATLHRTDDGLARFSSYVYHISKGVPLLVRNVLLSIYENKIIYFDWKKNRWEVNYDEMYTLDNDYSEPDAFMTAKKKISKLNDSSRAILGWASLLGPSFSFATVKKLCKDTDNIELNVEALQSALREGIIYATSSDDTYTFSRSIYVKAMRDLLNEAKIQIMHACLIDVCLKNRDRYNIFDIAFHINAAFDFVKGDKRSVEYCHYLHLAAEEALKIGANQEALDLYNRCIKMIPHEIPEESDDSYIRCQLIGMYVGCAEAYWVNDNFDTASEMLKLAEEKACNNSEVFPARFLYSRILFEGVHIEECTQYVLSCLKPLGYELKRHSLEDSKSIISALIPRIIDKITKSSEESQSSTDDDDRRIFEILSFLYVGSVATSYFSETAEMAIDFGIAQVEFFLSTVVNSFSAFALVYFAILANSLLEPSEDILFIGNYGEKLNREAENPIIFSRTEYLYVQSLGFIDSTTKERRLTIDYLDRNCVTCSDKHVIISLLLVSSWEKFLTSNNYSNYLADFETTHAQIMEMKPWVGDTSLITQLKRFLMCLQDNIKLDLIKSKSFLSDHNIQLSSPAAQESAKLAFSLHGWINSWYLLALVMHGEWDMAISYGENFKREFKNALLTSSRVFGIFMFTWSLVNKMLICPEFTKQKKYYEQYKENLGFFDSLCIGDNECITRVYFLLLKACGLIMNGLNFEASVMLEEVISLTEKLELFLLQAFAFETVGSIFVSMELYTSATQYLEEAIRNYAALGVKQKARHLRDKFGDLLVSNNLQVSIDEATQTDFPLVFSPERSSIDINASSMRSEKASFEIPFPEEQIDDDVSPVAQDSSLEELLISLDIIDLTSVMRSCQTIASEIELTGLLSTMTQRMLEDSSANAAVIAIRDDVGFKIAAYRTGELNEVFAPPMPITEDQTYVPSRVINYVVHTQKALFSNNINHEFDLQQERWNIENHMGRSVIAIPLYQKKEVFAILYLQGPPSAFHSRHMSVLSILGAQASFAIVNISLFHKVKEATNVNTIIIKAQREALNLVQKSEAKYRSFVDTMPCLLSKLEFDEELRIELFGSFWKEYCGELNINDPNTWKEYVHLDDHLKLQDFLLSHLHNPLPFELEIRIKRKDGVYRWNLTRCTPTTNEKNRTSFLCATIDIDDQKKARATALELARLRSNFLANISHELRTPFSGFYGMLSLLDDTNLDSEQRDIVSAARISCEMLLRVINDLLNFSKLEAGKVTLESDLEFSLESVVCDCMQSVYSACAEKGINLSYNVSPDIPFFTAGDGMKIGQMLKSILDNSVKTVNNGFIRVRAFLAGSSKKNDRDQLQIAFIVEDTREESNAIFLANMINSLNRGCNDYLPMDLSGTALGMSTCLQLCKIMGGSVSVEVSQNNPTFKICYDLKIHELGKERYDIIATPLFQNLTEFNDLIKSKVAIRVSKTSTEYDNITTYLQAARKVLHVFKGLQDLASIFDLSPDSALLRCSVVVVDVYSMDDVKAVEKILKSYPDVHVIYLCCDPSRLNIEQELQKPSGRSFACKKRWGFLQMPCTRENFLKVTLQVFKSNEDTCNFYSYVNEYGESPKPDDDMDRLNKCVGSKILIAEDNPIVRMTLKKQLEHLGMDVDAAEDGKETLQIFESHPDNYYQVCFVDYHMPVYDGLEVTRRMRKIERKHGCAPLPIFALTADMQPTMETQFQEVGITHYLSKPFKKETLIKMLLQYLVNGTDGNANTS.

One can recognise a Protein kinase domain in the interval 1-295 (MYSQHELRNK…GIVNDLEACL (295 aa)). Phosphoserine is present on residues Ser-12, Ser-16, and Ser-17. The segment covering 486–503 (SGNTRKTSLLGSNHSSYS) has biased composition (polar residues). Positions 486-506 (SGNTRKTSLLGSNHSSYSDKL) are disordered. TPR repeat units lie at residues 829–862 (CHYLHLAAEEALKIGANQEALDLYNRCIKMIPHE) and 1340–1373 (AFAFETVGSIFVSMELYTSATQYLEEAIRNYAAL). The PAC domain occupies 1730–1781 (FELEIRIKRKDGVYRWNLTRCTPTTNEKNRTSFLCATIDIDDQKKARATALE). The Histidine kinase domain maps to 1792 to 2018 (NISHELRTPF…TFKICYDLKI (227 aa)). Phosphohistidine; by autocatalysis is present on His-1795. Residues 2211–2333 (KILIAEDNPI…TLIKMLLQYL (123 aa)) form the Response regulatory domain. Position 2263 is a 4-aspartylphosphate (Asp-2263).

The protein resides in the cytoplasm. The enzyme catalyses ATP + protein L-histidine = ADP + protein N-phospho-L-histidine.. Functionally, involved in the control of the SAPK-dependent transcriptional response to peroxide stress. Regulates sty1 activity. The chain is Peroxide stress-activated histidine kinase mak3 (mak3) from Schizosaccharomyces pombe (strain 972 / ATCC 24843) (Fission yeast).